A 1314-amino-acid polypeptide reads, in one-letter code: AT-rich interactive domain-containing protein 4B (1314 aa).

2 disordered regions span residues 123 to 169 (LPLT…RKQT) and 266 to 306 (KTEL…EPFP). Serine 276, serine 295, and serine 296 each carry phosphoserine. Residues 277–305 (EAEEEEEEEDDEKEKEDNSSEEEEEIEPF) are compositionally biased toward acidic residues. The region spanning 306 to 398 (PEERENFLQQ…YLYGFEEYCR (93 aa)) is the ARID domain. Glycyl lysine isopeptide (Lys-Gly) (interchain with G-Cter in SUMO2) cross-links involve residues lysine 428 and lysine 461. The segment covering 439–464 (NVEDSKNVMPKEETPAEDESERKENI) has biased composition (basic and acidic residues). Disordered stretches follow at residues 439–577 (NVED…KVQV), 635–678 (IKHR…SPEM), 709–888 (ASES…EEKR), 943–1215 (KELF…RLPK), and 1256–1290 (VASIDRRRKRLKKKERESAATSSSSSSPSSSSITA). Serine 482 carries the post-translational modification Phosphoserine. The span at 486–511 (KEAHITKLEENENLEDKDGGRARTEE) shows a compositional bias: basic and acidic residues. Residues 531-567 (NKEEDEDDEEIEEEEEEDEEEDEDEDDDDNNEEEEFE) show a composition bias toward acidic residues. The Tudor-knot domain occupies 572–624 (GMKVQVRYGRGKNQKMYEASIKDSDVEGGEALYLVHYCGWNVRYDEWIKADKI). Residues 643-656 (NKLDKEKDRDEKYS) are compositionally biased toward basic and acidic residues. 4 positions are modified to phosphoserine: serine 666, serine 668, serine 675, and serine 717. Composition is skewed to basic and acidic residues over residues 722–754 (ERCTQDVDNIGKDESKVEHSTHSRNELISKEEQ) and 778–787 (SPERLRKDME). A Glycyl lysine isopeptide (Lys-Gly) (interchain with G-Cter in SUMO2) cross-link involves residue lysine 751. 2 positions are modified to phosphoserine: serine 778 and serine 790. The span at 788–800 (AISEDTDFEEEDE) shows a compositional bias: acidic residues. Threonine 793 is subject to Phosphothreonine. Composition is skewed to basic and acidic residues over residues 808–817 (VKKDTTDKAL), 841–853 (GKKEDRTKSKEPL), and 997–1012 (KPIEEKPLEVSDRKTE). Polar residues predominate over residues 1013-1023 (FPSSGSNSVLN). At serine 1016 the chain carries Phosphoserine. Threonine 1028 is modified (phosphothreonine). Positions 1030–1051 (ESPSSVTITEASQQQSSVTVSV) are enriched in low complexity. Serine 1031 bears the Phosphoserine mark. Basic and acidic residues predominate over residues 1058–1067 (EEVRSIKSET). Residues 1089–1103 (SSPAGFDASVSSSSS) are compositionally biased toward low complexity. Over residues 1132–1150 (KKQKRSHKATVVNNKKKGK) the composition is skewed to basic residues. Residue threonine 1152 is modified to Phosphothreonine. Phosphoserine occurs at positions 1154, 1155, 1157, and 1161. Residues 1164–1186 (ESVTKTQTIKSVPTGMKTHNSKS) are compositionally biased toward polar residues. The span at 1198-1210 (RNGDKDPDLKEPS) shows a compositional bias: basic and acidic residues. A coiled-coil region spans residues 1227–1272 (ENMTSAERISILQEKLQEIRKHYLSLKSEVASIDRRRKRLKKKERE). Residues 1274-1290 (AATSSSSSSPSSSSITA) are compositionally biased toward low complexity.

In terms of assembly, component of a Sin3A corepressor complex consisting of SIN3A, SAP130, SUDS3/SAP45, SAP180, HDAC1 and HDAC2. Interacts with ARID4A. Interacts with AR. Expressed in Sertoli cells of the testis.

It localises to the nucleus. Acts as a transcriptional repressor. May function in the assembly and/or enzymatic activity of the Sin3A corepressor complex or in mediating interactions between the complex and other regulatory complexes. Plays a role in the regulation of epigenetic modifications at the PWS/AS imprinting center near the SNRPN promoter, where it might function as part of a complex with RB1 and ARID4A. Involved in spermatogenesis, together with ARID4A, where it functions as a transcriptional coactivator for AR (androgen receptor) and enhances expression of genes required for sperm maturation. Regulates expression of the tight junction protein CLDN3 in the testis, which is important for integrity of the blood-testis barrier. Plays a role in myeloid homeostasis where it regulates the histone methylation state of bone marrow cells and expression of various genes involved in hematopoiesis. May function as a leukemia suppressor. This Mus musculus (Mouse) protein is AT-rich interactive domain-containing protein 4B (Arid4b).